The primary structure comprises 208 residues: MDKELKKEKIKLILIEPEEHLGYLLSEFFYQQNFVTYISESFIHLTDIINLHNPDIIIIDDSQNLETYKLSNIYLPIILLTTRGLKNDRMKIHKLGFDAYMLKPFDPDELIAIISNLIYKKRNIKELQFIKHRISNLNLKLKYRETSFSYINLTVKEKEVFKFIQDGLTNKQISNVMGITQRSVEKYVTKIFEKLKIQNRIQILSYFN.

A Response regulatory domain is found at 11 to 118 (KLILIEPEEH…ELIAIISNLI (108 aa)). Residue D60 is modified to 4-aspartylphosphate. In terms of domain architecture, HTH luxR-type spans 146–208 (TSFSYINLTV…NRIQILSYFN (63 aa)).

It localises to the plastid. Its subcellular location is the chloroplast. This is Probable transcriptional regulator ycf29 (ycf29) from Guillardia theta (Cryptophyte).